Consider the following 571-residue polypeptide: WAP, Kazal, immunoglobulin, Kunitz and NTR domain-containing protein 2 (571 aa).

Positions 1–29 (MCAPGYHRFWFHWGLLLLLLLEAPLRGLA) are cleaved as a signal peptide. The WAP domain occupies 34 to 87 (RYSHAGICPNDMNPNLWVDAQSTCKRECETDQECETYEKCCPNVCGTKSCVAAR). Disulfide bonds link C41/C74, C57/C78, C61/C73, C67/C83, C129/C159, C133/C152, C141/C170, and C226/C282. The Kazal-like domain maps to 121–172 (WDGQPVCKCKDRCEKEPSFTCASDGLTYYNRCFMDAEACSKGITLSVVTCRY). In terms of domain architecture, Ig-like C2-type spans 205–298 (PALLNHPVHQ…GVLRADFPLS (94 aa)). N314 carries an N-linked (GlcNAc...) asparagine glycan. 9 disulfide bridges follow: C323–C373, C332–C356, C348–C369, C381–C431, C390–C414, C406–C427, C440–C510, C443–C512, and C454–C561. BPTI/Kunitz inhibitor domains lie at 323 to 373 (CLKP…MLAC) and 381 to 431 (CSLP…EESC). The NTR domain occupies 440–561 (CRACKPRQKL…LREVMYKKTC (122 aa)). N-linked (GlcNAc...) asparagine glycosylation occurs at N514.

This sequence belongs to the WFIKKN family. Interacts with both mature and propeptide myostatin/MSTN. In terms of tissue distribution, widely expressed, with high expression in skeletal muscle and heart. Also expressed in brain, lung and testis. Weakly expressed in liver and kidney.

Its subcellular location is the secreted. Protease-inhibitor that contains multiple distinct protease inhibitor domains. Probably has serine protease- and metalloprotease-inhibitor activity. Inhibits the biological activity of mature myostatin, but not activin. The polypeptide is WAP, Kazal, immunoglobulin, Kunitz and NTR domain-containing protein 2 (Wfikkn2) (Mus musculus (Mouse)).